The chain runs to 394 residues: Salivary plasminogen activator gamma (394 aa).

Residues 1–36 (MVNTMKTKLLCVLLLCGAVFSLPRQETYRQLARGSR) form the signal peptide. The Kringle domain maps to 45-126 (CYKDQGVTYR…TSESCSVPVC (82 aa)). 9 disulfides stabilise this stretch: Cys-45–Cys-126, Cys-66–Cys-108, Cys-97–Cys-121, Cys-131–Cys-262, Cys-174–Cys-190, Cys-182–Cys-251, Cys-276–Cys-351, Cys-308–Cys-324, and Cys-341–Cys-369. One can recognise a Peptidase S1 domain in the interval 143–393 (STGGLFTDIT…YLGWIRDNMR (251 aa)). Residues His-189 and Asp-238 each act as charge relay system in the active site. N-linked (GlcNAc...) asparagine glycosylation occurs at Asn-315. The active-site Charge relay system is Ser-345.

This sequence belongs to the peptidase S1 family. As to quaternary structure, monomer.

It is found in the secreted. It carries out the reaction Specific cleavage of Arg-|-Val bond in plasminogen to form plasmin.. Its function is as follows. Probably essential to support the feeding habits of this exclusively haematophagous animal. Probable potent thrombolytic agent. The protein is Salivary plasminogen activator gamma of Desmodus rotundus (Vampire bat).